The sequence spans 363 residues: Aminomethyltransferase (363 aa).

The protein belongs to the GcvT family. The glycine cleavage system is composed of four proteins: P, T, L and H.

The catalysed reaction is N(6)-[(R)-S(8)-aminomethyldihydrolipoyl]-L-lysyl-[protein] + (6S)-5,6,7,8-tetrahydrofolate = N(6)-[(R)-dihydrolipoyl]-L-lysyl-[protein] + (6R)-5,10-methylene-5,6,7,8-tetrahydrofolate + NH4(+). Its function is as follows. The glycine cleavage system catalyzes the degradation of glycine. The protein is Aminomethyltransferase of Thermotoga neapolitana (strain ATCC 49049 / DSM 4359 / NBRC 107923 / NS-E).